The chain runs to 616 residues: Proline--tRNA ligase (616 aa).

This sequence belongs to the class-II aminoacyl-tRNA synthetase family. ProS type 1 subfamily. In terms of assembly, homodimer.

It is found in the cytoplasm. The enzyme catalyses tRNA(Pro) + L-proline + ATP = L-prolyl-tRNA(Pro) + AMP + diphosphate. In terms of biological role, catalyzes the attachment of proline to tRNA(Pro) in a two-step reaction: proline is first activated by ATP to form Pro-AMP and then transferred to the acceptor end of tRNA(Pro). As ProRS can inadvertently accommodate and process non-cognate amino acids such as alanine and cysteine, to avoid such errors it has two additional distinct editing activities against alanine. One activity is designated as 'pretransfer' editing and involves the tRNA(Pro)-independent hydrolysis of activated Ala-AMP. The other activity is designated 'posttransfer' editing and involves deacylation of mischarged Ala-tRNA(Pro). The misacylated Cys-tRNA(Pro) is not edited by ProRS. The chain is Proline--tRNA ligase from Streptococcus gordonii (strain Challis / ATCC 35105 / BCRC 15272 / CH1 / DL1 / V288).